We begin with the raw amino-acid sequence, 468 residues long: Ribulose bisphosphate carboxylase large chain (468 aa).

The residue at position 5 (Lys-5) is an N6,N6,N6-trimethyllysine. 2 residues coordinate substrate: Asn-114 and Thr-164. The active-site Proton acceptor is Lys-166. Lys-168 serves as a coordination point for substrate. 3 residues coordinate Mg(2+): Lys-192, Asp-194, and Glu-195. Lys-192 is subject to N6-carboxylysine. Catalysis depends on His-285, which acts as the Proton acceptor. Positions 286, 318, and 370 each coordinate substrate.

Belongs to the RuBisCO large chain family. Type I subfamily. As to quaternary structure, heterohexadecamer of 8 large chains and 8 small chains; disulfide-linked. The disulfide link is formed within the large subunit homodimers. It depends on Mg(2+) as a cofactor. In terms of processing, the disulfide bond which can form in the large chain dimeric partners within the hexadecamer appears to be associated with oxidative stress and protein turnover.

It is found in the plastid. The protein localises to the chloroplast. It catalyses the reaction 2 (2R)-3-phosphoglycerate + 2 H(+) = D-ribulose 1,5-bisphosphate + CO2 + H2O. It carries out the reaction D-ribulose 1,5-bisphosphate + O2 = 2-phosphoglycolate + (2R)-3-phosphoglycerate + 2 H(+). In terms of biological role, ruBisCO catalyzes two reactions: the carboxylation of D-ribulose 1,5-bisphosphate, the primary event in carbon dioxide fixation, as well as the oxidative fragmentation of the pentose substrate in the photorespiration process. Both reactions occur simultaneously and in competition at the same active site. This chain is Ribulose bisphosphate carboxylase large chain, found in Catesbaea spinosa.